The following is a 399-amino-acid chain: ATP phosphoribosyltransferase regulatory subunit (399 aa).

Belongs to the class-II aminoacyl-tRNA synthetase family. HisZ subfamily. In terms of assembly, heteromultimer composed of HisG and HisZ subunits.

It is found in the cytoplasm. The protein operates within amino-acid biosynthesis; L-histidine biosynthesis; L-histidine from 5-phospho-alpha-D-ribose 1-diphosphate: step 1/9. In terms of biological role, required for the first step of histidine biosynthesis. May allow the feedback regulation of ATP phosphoribosyltransferase activity by histidine. This Symbiobacterium thermophilum (strain DSM 24528 / JCM 14929 / IAM 14863 / T) protein is ATP phosphoribosyltransferase regulatory subunit.